The primary structure comprises 280 residues: Diaminopimelate epimerase (280 aa).

Substrate-binding residues include Asn12, Gln45, and Asn65. The active-site Proton donor is Cys74. Residues 75–76 (GN), Asn163, Asn196, and 214–215 (ER) each bind substrate. The Proton acceptor role is filled by Cys223. Residue 224-225 (GT) participates in substrate binding.

This sequence belongs to the diaminopimelate epimerase family. In terms of assembly, homodimer.

The protein localises to the cytoplasm. The catalysed reaction is (2S,6S)-2,6-diaminopimelate = meso-2,6-diaminopimelate. The protein operates within amino-acid biosynthesis; L-lysine biosynthesis via DAP pathway; DL-2,6-diaminopimelate from LL-2,6-diaminopimelate: step 1/1. Functionally, catalyzes the stereoinversion of LL-2,6-diaminopimelate (L,L-DAP) to meso-diaminopimelate (meso-DAP), a precursor of L-lysine and an essential component of the bacterial peptidoglycan. The sequence is that of Diaminopimelate epimerase from Shewanella sediminis (strain HAW-EB3).